The following is a 112-amino-acid chain: Putative pterin-4-alpha-carbinolamine dehydratase (112 aa).

The protein belongs to the pterin-4-alpha-carbinolamine dehydratase family.

The enzyme catalyses (4aS,6R)-4a-hydroxy-L-erythro-5,6,7,8-tetrahydrobiopterin = (6R)-L-erythro-6,7-dihydrobiopterin + H2O. This is Putative pterin-4-alpha-carbinolamine dehydratase from Shewanella pealeana (strain ATCC 700345 / ANG-SQ1).